The following is a 76-amino-acid chain: Acyl carrier protein (76 aa).

One can recognise a Carrier domain in the interval 1-76 (MSIEERVKKI…SAIDYVQNNQ (76 aa)). S36 is modified (O-(pantetheine 4'-phosphoryl)serine).

The protein belongs to the acyl carrier protein (ACP) family. 4'-phosphopantetheine is transferred from CoA to a specific serine of apo-ACP by AcpS. This modification is essential for activity because fatty acids are bound in thioester linkage to the sulfhydryl of the prosthetic group.

The protein resides in the cytoplasm. The protein operates within lipid metabolism; fatty acid biosynthesis. In terms of biological role, carrier of the growing fatty acid chain in fatty acid biosynthesis. The protein is Acyl carrier protein of Actinobacillus succinogenes (strain ATCC 55618 / DSM 22257 / CCUG 43843 / 130Z).